Consider the following 928-residue polypeptide: Nitrogen network kinase 1 (928 aa).

Residues 1-12 (MFTSQRQLRQNG) show a composition bias toward polar residues. Disordered stretches follow at residues 1–43 (MFTS…SYGR) and 81–118 (HEHPSRSTLVQLQTRSQPDDVASSQVNPEGGTDDLELG). A compositionally biased stretch (low complexity) spans 13 to 29 (SPMSSSRSSQHSSGTAS). 2 stretches are compositionally biased toward polar residues: residues 30–40 (PISDSPASNRS) and 86–107 (RSTLVQLQTRSQPDDVASSQVN). 2 positions are modified to phosphoserine: Ser178 and Ser179. The segment at 374 to 394 (ANDDNINSRNTPNNSNDTYVN) is disordered. The span at 375 to 391 (NDDNINSRNTPNNSNDT) shows a compositional bias: low complexity. Ser405 and Ser426 each carry phosphoserine. Residues 449 to 912 (HRLGKIIGFG…WKLKRIEEVL (464 aa)) enclose the Protein kinase domain. ATP contacts are provided by residues 455–463 (IGFGAWGII) and Lys478. Catalysis depends on Asp580, which acts as the Proton acceptor. Disordered regions lie at residues 670 to 741 (ENRK…KYIG) and 767 to 813 (YDSP…SGSS). Residues 683-696 (VSSSSHSLKHLNQP) show a composition bias toward polar residues. Ser737 is modified (phosphoserine). Tyr739 is subject to Phosphotyrosine. Low complexity predominate over residues 769–813 (SPDSSQSEISAASSSSSNLSSLSSSTKASAVTNSGVTTSSPSGSS).

This sequence belongs to the protein kinase superfamily. Ser/Thr protein kinase family. In terms of assembly, interacts with URE2 and GDH2. Also interacts with the TORC1 kinase complex.

Its subcellular location is the cytoplasm. The catalysed reaction is L-seryl-[protein] + ATP = O-phospho-L-seryl-[protein] + ADP + H(+). It catalyses the reaction L-threonyl-[protein] + ATP = O-phospho-L-threonyl-[protein] + ADP + H(+). Its function is as follows. Serine/threonine-protein kinase involved in the phosphorylation of the NAD(+)-dependent glutamate dehydrogenase GDH2. When overexpressed, confers hypersensitivity to rapamycin and induces rapid nuclear accumulation of GLN3 to activate the transcription of nitrogen-regulated genes. This is Nitrogen network kinase 1 (NNK1) from Saccharomyces cerevisiae (strain ATCC 204508 / S288c) (Baker's yeast).